The following is a 119-amino-acid chain: Small ribosomal subunit protein uS13 (119 aa).

The span at 92–110 shows a compositional bias: basic residues; sequence RKDTCKRSTKKNARTRKGP. The tract at residues 92–119 is disordered; it reads RKDTCKRSTKKNARTRKGPKKDNRWKER.

This sequence belongs to the universal ribosomal protein uS13 family. As to quaternary structure, part of the 30S ribosomal subunit. Forms a loose heterodimer with protein S19. Forms two bridges to the 50S subunit in the 70S ribosome.

In terms of biological role, located at the top of the head of the 30S subunit, it contacts several helices of the 16S rRNA. In the 70S ribosome it contacts the 23S rRNA (bridge B1a) and protein L5 of the 50S subunit (bridge B1b), connecting the 2 subunits; these bridges are implicated in subunit movement. Contacts the tRNAs in the A and P-sites. This chain is Small ribosomal subunit protein uS13, found in Mycoplasma sp.